The chain runs to 173 residues: Lactoylglutathione lyase (173 aa).

The 147-residue stretch at 24 to 170 (VFNHTMLRVK…DGYWVEVIQP (147 aa)) folds into the VOC domain. Residue H27 participates in Ni(2+) binding. R31 is a substrate binding site. E93 contacts Ni(2+). Residues N97, R116, and H120 each contribute to the substrate site. The Ni(2+) site is built by H120 and E166. Residue E166 is the Proton donor/acceptor of the active site.

It belongs to the glyoxalase I family. As to quaternary structure, monomer. Ni(2+) is required as a cofactor. It depends on Zn(2+) as a cofactor.

The enzyme catalyses (R)-S-lactoylglutathione = methylglyoxal + glutathione. It functions in the pathway secondary metabolite metabolism; methylglyoxal degradation; (R)-lactate from methylglyoxal: step 1/2. Its function is as follows. Catalyzes the conversion of hemimercaptal, formed from methylglyoxal and glutathione, to S-lactoylglutathione. The polypeptide is Lactoylglutathione lyase (gloA) (Pseudomonas putida (Arthrobacter siderocapsulatus)).